The sequence spans 634 residues: RNA polymerase sigma factor RpoD (634 aa).

Residues 177–202 (LHDETPENDEENSSETEGEEHEDNHL) form a disordered region. Residues 182–197 (PENDEENSSETEGEEH) are compositionally biased toward acidic residues. The segment at 385–455 (MIEANLRLVI…TRAIADQART (71 aa)) is sigma-70 factor domain-2. The short motif at 409-412 (DLIQ) is the Interaction with polymerase core subunit RpoC element. Residues 464–541 (ETINKILRTS…DKNAVAPIDA (78 aa)) are sigma-70 factor domain-3. The segment at 554–607 (VLATLTPREERVLRMRFGIGMNTDHTLEEVGQQFKVTRERIRQIESKALRKLQH) is sigma-70 factor domain-4. The H-T-H motif DNA-binding region spans 580-599 (LEEVGQQFKVTRERIRQIES). Positions 608–634 (PIRSKKLNSFRSGGKRGDGNSSDLLEA) are disordered.

The protein belongs to the sigma-70 factor family. RpoD/SigA subfamily. Interacts transiently with the RNA polymerase catalytic core.

The protein localises to the cytoplasm. Its function is as follows. Sigma factors are initiation factors that promote the attachment of RNA polymerase to specific initiation sites and are then released. This sigma factor is the primary sigma factor during exponential growth. This Rickettsia conorii (strain ATCC VR-613 / Malish 7) protein is RNA polymerase sigma factor RpoD.